We begin with the raw amino-acid sequence, 321 residues long: Glucokinase (321 aa).

Position 8 to 13 (8 to 13 (GDVGGT)) interacts with ATP.

The protein belongs to the bacterial glucokinase family.

Its subcellular location is the cytoplasm. The catalysed reaction is D-glucose + ATP = D-glucose 6-phosphate + ADP + H(+). In Pectobacterium atrosepticum (strain SCRI 1043 / ATCC BAA-672) (Erwinia carotovora subsp. atroseptica), this protein is Glucokinase.